Here is a 790-residue protein sequence, read N- to C-terminus: PAN2-PAN3 deadenylation complex subunit PAN3 (790 aa).

2 disordered regions span residues 166 to 191 (IAQQ…AVSA) and 235 to 259 (AMIS…ASPI). The span at 168-191 (QQQPQHPQKQQQHPPSVGGGAVSA) shows a compositional bias: low complexity. Positions 369–655 (DAAEAAQHAL…SVTDLMPMIG (287 aa)) are pseudokinase domain. Residues R423, 472–479 (DYHPGSQT), and 552–553 (TK) each bind ATP. The stretch at 656 to 694 (ARFYTQLDALQSKIDMQEDELAKEMENGRLYRILVKLNS) forms a coiled coil. Residues 695–790 (INERPDFNLD…FSELMSSAAN (96 aa)) are knob domain.

This sequence belongs to the protein kinase superfamily. PAN3 family. In terms of assembly, homodimer. Forms a heterotrimer with a catalytic subunit PAN2 to form the poly(A)-nuclease (PAN) deadenylation complex. Interacts (via PAM-2 motif) with poly(A)-binding protein (via PABC domain), conferring substrate specificity of the enzyme complex. Interacts with the GW182 family protein gw. Interacts with Gyf.

Its subcellular location is the cytoplasm. It is found in the P-body. Regulatory subunit of the poly(A)-nuclease (PAN) deadenylation complex, one of two cytoplasmic mRNA deadenylases involved in general and miRNA-mediated mRNA turnover. PAN specifically shortens poly(A) tails of RNA and the activity is stimulated by poly(A)-binding protein (PABP). PAN deadenylation is followed by rapid degradation of the shortened mRNA tails by the CCR4-NOT complex. Deadenylated mRNAs are then degraded by two alternative mechanisms, namely exosome-mediated 3'-5' exonucleolytic degradation, or deadenylation-dependent mRNA decaping and subsequent 5'-3' exonucleolytic degradation by XRN1. PAN3 acts as a positive regulator for PAN activity, recruiting the catalytic subunit PAN2 to mRNA via its interaction with RNA and PABP, and to miRNA targets via its interaction with GW182 family proteins. The protein is PAN2-PAN3 deadenylation complex subunit PAN3 of Drosophila melanogaster (Fruit fly).